Here is a 416-residue protein sequence, read N- to C-terminus: Serine hydroxymethyltransferase (416 aa).

(6S)-5,6,7,8-tetrahydrofolate is bound by residues Leu-117 and 121 to 123; that span reads GHL. Lys-226 carries the N6-(pyridoxal phosphate)lysine modification.

Belongs to the SHMT family. Homodimer. Pyridoxal 5'-phosphate is required as a cofactor.

The protein resides in the cytoplasm. It catalyses the reaction (6R)-5,10-methylene-5,6,7,8-tetrahydrofolate + glycine + H2O = (6S)-5,6,7,8-tetrahydrofolate + L-serine. It functions in the pathway one-carbon metabolism; tetrahydrofolate interconversion. Its pathway is amino-acid biosynthesis; glycine biosynthesis; glycine from L-serine: step 1/1. Functionally, catalyzes the reversible interconversion of serine and glycine with tetrahydrofolate (THF) serving as the one-carbon carrier. This reaction serves as the major source of one-carbon groups required for the biosynthesis of purines, thymidylate, methionine, and other important biomolecules. Also exhibits THF-independent aldolase activity toward beta-hydroxyamino acids, producing glycine and aldehydes, via a retro-aldol mechanism. This chain is Serine hydroxymethyltransferase, found in Leptospira biflexa serovar Patoc (strain Patoc 1 / Ames).